Consider the following 1996-residue polypeptide: Non-reducing polyketide synthase atnG (1996 aa).

Positions 9-245 are N-terminal acylcarrier protein transacylase (SAT) domain; it reads FLFGDQADAP…AELPAFGAVH (237 aa). The Ketosynthase family 3 (KS3) domain maps to 366–794; that stretch reads SGSVAVIGMS…GGNSCFVLEE (429 aa). Active-site for beta-ketoacyl synthase activity residues include C538, H673, and H713. A malonyl-CoA:ACP transacylase (MAT) domain region spans residues 891–1150; the sequence is AFAFTGQGAH…VKYTQAISHC (260 aa). Residue S982 is the For acyl/malonyl transferase activity of the active site. Positions 1263–1392 are N-terminal hotdog fold; it reads HHLVSQDDNG…CCIRQTDEQD (130 aa). The PKS/mFAS DH domain occupies 1263–1569; it reads HHLVSQDDNG…FRKMPRTTLH (307 aa). The interval 1267-1568 is product template (PT) domain; it reads SQDDNGKEQS…RFRKMPRTTL (302 aa). Catalysis depends on H1295, which acts as the Proton acceptor; for dehydratase activity. Residues 1416–1569 are C-terminal hotdog fold; the sequence is ASGIANRFQG…FRKMPRTTLH (154 aa). The Proton donor; for dehydratase activity role is filled by D1481. A disordered region spans residues 1573-1621; that stretch reads GKAVPPKPAKETSHPSVEATAPATTNGRSSATNAQAEAPAPPVNGSNGH. The segment covering 1594–1607 has biased composition (polar residues); sequence PATTNGRSSATNAQ. Positions 1620-1697 constitute a Carrier domain; it reads GHRKTVESVL…DAQRQLRTLE (78 aa). At S1657 the chain carries O-(pantetheine 4'-phosphoryl)serine. The segment at 1725–1923 is thioesterase (TE) domain; that stretch reads KRECNVVLMQ…ERTFVVWAKK (199 aa).

It functions in the pathway secondary metabolite biosynthesis; terpenoid biosynthesis. In terms of biological role, non-reducing polyketide synthase; part of the gene cluster that mediates the biosynthesis of the meroterpenoids arthripenoids. The pathway begins with the HR-PKS atnH that catalyzes two chain-extension steps to form a reduced triketide, which then primes the SAT domain in the NR-PKS atnG to initiate three more cycles of extension to give a linear hexaketide corresponding to the polyketide part of arthripenoids. The FAD-dependent monooxygenase atnJ then performs an oxidative decarboxylation at C11 of the atnH/atnG product, via an electrophilic aromatic hydroxylation with concomitant ipso-decarboxylation. The membrane-bound polyprenyl transferase atnF then introduces a farnesyl group before the FAD-dependent monooxygenase atnK functions as the first epoxidase on terminal C12'-C13' olefin, followed by a second epoxidation on C7'-C8' catalyzed by atnA. The terpene cyclase/mutase atnI then initiates the sequential tricyclic ring formation through protonation of the terminal epoxide and catalyzes the regioselective and stereoselective 6/6/6-tricyclic ring formation. The cytochrome P450 monooxygenase atnM is responsible for hydroxylating both C1' and C10'. The next steps may involve ketoreduction and acetyl transfer by the ketoreductase atnB and the acetyltransferase atnC, and lead to the production of arthripenoid B, the final biosynthetic product of the atn cluster. The hydroquinone moiety in arthripenoid B is prone to undergo spontaneous oxidation to afford a benzoquinone compound, a key intermediate for generating structure diversity. For instance, addition of a cysteine followed by ring contraction gives arthripenoid A, tautomerization gives the main product arthripenoid C, addition of a molecular of water or amine affords arthripenoid D or E, respectively, and loss of one water forms arthripenoid F. The polypeptide is Non-reducing polyketide synthase atnG (Arthrinium sp).